Here is a 344-residue protein sequence, read N- to C-terminus: BURP domain-containing protein 16 (344 aa).

A signal peptide spans 1 to 25; it reads MATSFLFSLILLLITALSLPFPLHA. Asn-90, Asn-120, Asn-181, and Asn-333 each carry an N-linked (GlcNAc...) asparagine glycan. Residues 128–341 enclose the BURP domain; it reads FFREQELKEG…FNGSMTWVIA (214 aa).

Expressed in roots, stems, leaves and panicles.

The chain is BURP domain-containing protein 16 (BURP16) from Oryza sativa subsp. japonica (Rice).